Reading from the N-terminus, the 638-residue chain is 1-deoxy-D-xylulose-5-phosphate synthase (638 aa).

Residues H75 and 116–118 (AHS) each bind thiamine diphosphate. Residue D147 participates in Mg(2+) binding. Thiamine diphosphate is bound by residues 148–149 (GA), N177, Y288, and E370. Residue N177 coordinates Mg(2+).

Belongs to the transketolase family. DXPS subfamily. In terms of assembly, homodimer. Requires Mg(2+) as cofactor. It depends on thiamine diphosphate as a cofactor.

It carries out the reaction D-glyceraldehyde 3-phosphate + pyruvate + H(+) = 1-deoxy-D-xylulose 5-phosphate + CO2. Its pathway is metabolic intermediate biosynthesis; 1-deoxy-D-xylulose 5-phosphate biosynthesis; 1-deoxy-D-xylulose 5-phosphate from D-glyceraldehyde 3-phosphate and pyruvate: step 1/1. Its function is as follows. Catalyzes the acyloin condensation reaction between C atoms 2 and 3 of pyruvate and glyceraldehyde 3-phosphate to yield 1-deoxy-D-xylulose-5-phosphate (DXP). The sequence is that of 1-deoxy-D-xylulose-5-phosphate synthase from Cupriavidus taiwanensis (strain DSM 17343 / BCRC 17206 / CCUG 44338 / CIP 107171 / LMG 19424 / R1) (Ralstonia taiwanensis (strain LMG 19424)).